A 1668-amino-acid polypeptide reads, in one-letter code: Kinesin-like protein KIF21B (1668 aa).

A Kinesin motor domain is found at 8–371; that stretch reads CVKVAVRIRP…LKYANRARNI (364 aa). 87–94 serves as a coordination point for ATP; it reads GQTGAGKT. The stretch at 372–465 forms a coiled coil; sequence KNKVVVNQDK…LMSQEANLLL (94 aa). The tract at residues 401–1100 is interaction with TRIM3; it reads MEYKAGKRVI…LQALIYNVQH (700 aa). Disordered stretches follow at residues 553–629 and 837–866; these read KKKE…PEEK and RVGL…GARS. Positions 579 to 628 are enriched in acidic residues; it reads NSEETDENEAEEEEEERDESGCEEEEGREDEDEDSGSEESLVDSDSDPEE. The residue at position 580 (Ser-580) is a Phosphoserine. Thr-583 is subject to Phosphothreonine. Residues 847-866 show a composition bias toward low complexity; sequence SGAEVSASTTSSEAESGARS. The stretch at 924–1019 forms a coiled coil; it reads IIDIVMQRMT…TKEELDSTDT (96 aa). 3 positions are modified to phosphoserine: Ser-1150, Ser-1168, and Ser-1217. Positions 1199–1219 are enriched in polar residues; sequence LPTRGSTFPRQSRGATDTSPL. The tract at residues 1199 to 1253 is disordered; it reads LPTRGSTFPRQSRGATDTSPLTRRKSYDRGQPIRSTDMGFTPPSSPPTRPRNDRN. Phosphothreonine is present on Thr-1239. Phosphoserine is present on Ser-1243. WD repeat units lie at residues 1308-1345, 1348-1386, 1412-1450, 1453-1495, 1504-1541, 1545-1584, and 1587-1624; these read GHTK…EIAA, GHPN…KCIR, QGEH…PIGK, GHIG…TGTI, PHYD…LIQQ, AHKD…PIGE, and GHDS…TPCL.

It belongs to the TRAFAC class myosin-kinesin ATPase superfamily. Kinesin family. In terms of assembly, interacts with TRIM3; the interaction positively affects motility of KIF21B. Interacts with GABARAP and GABA(A) receptor subunits: GABRG2, GABRA1 and GABRA2. May interact with GABA(A) receptor subunits: GABRB2 and GABRB3. In terms of tissue distribution, expressed in brain (at protein level). Expressed in spleen and at lower levels in testes.

The protein localises to the cytoplasm. It is found in the cytoskeleton. The protein resides in the cell projection. It localises to the dendrite. Its subcellular location is the growth cone. The protein localises to the axon. It is found in the cytoplasmic vesicle. Its function is as follows. Plus-end directed microtubule-dependent motor protein which displays processive activity. Is involved in regulation of microtubule dynamics, synapse function and neuronal morphology, including dendritic tree branching and spine formation. Plays a role in lerning and memory. Involved in delivery of gamma-aminobutyric acid (GABA(A)) receptor to cell surface. The protein is Kinesin-like protein KIF21B (Kif21b) of Mus musculus (Mouse).